A 377-amino-acid chain; its full sequence is Apelin receptor (377 aa).

Residues Met1–Leu28 lie on the Extracellular side of the membrane. Asn13 is a glycosylation site (N-linked (GlcNAc...) asparagine). 2 cysteine pairs are disulfide-bonded: Cys17-Cys279 and Cys100-Cys179. Residues Ile29–Phe52 form a helical membrane-spanning segment. The Cytoplasmic segment spans residues Trp53 to Ala62. Residues Asp63–Ala84 form a helical membrane-spanning segment. The Extracellular portion of the chain corresponds to Thr85–Thr97. A helical transmembrane segment spans residues Phe98–Phe123. The Cytoplasmic portion of the chain corresponds to Asp124–Gly144. Residues Ala145–Val162 traverse the membrane as a helical segment. Residues Met163–Glu196 are Extracellular-facing. Asn173 carries N-linked (GlcNAc...) asparagine glycosylation. The helical transmembrane segment at Val197–Phe221 threads the bilayer. Over Ile222 to Leu244 the chain is Cytoplasmic. A helical membrane pass occupies residues Leu245–Leu268. Residues Tyr269–Asn287 lie on the Extracellular side of the membrane. Residues Val288 to Phe310 form a helical membrane-spanning segment. Residues Asp311–Asp377 are Cytoplasmic-facing. Low complexity predominate over residues Ser335–Ser349. The disordered stretch occupies residues Ser335–Asp377.

Belongs to the G-protein coupled receptor 1 family. As to quaternary structure, homodimer; dimerization inhibits APLNR-mediated G protein and beta-arrestin signaling pathways compared to monomeric APLNR. In terms of tissue distribution, widely expressed. Highest expression in the lung, lower in the heart, placenta, ovary, skeletal muscle, mammary gland, kidney and several structures in the brain as the hypothalamus (supraoptic and periventricular nuclei), pituitary, olfactory bulb and pineal gland.

It localises to the cell membrane. Functionally, g protein-coupled receptor for peptide hormones apelin (APLN) and apelin receptor early endogenous ligand (APELA/ELA), that plays a role in the regulation of normal cardiovascular function and fluid homeostasis. When acting as apelin receptor, activates both G(i) protein pathway that inhibits adenylate cyclase activity, and the beta-arrestin pathway that promotes internalization of the receptor. APLNR/APJ also functions as mechanoreceptor that is activated by pathological stimuli in a G-protein-independent fashion to induce beta-arrestin signaling, hence eliciting cardiac hypertrophy. However, the presence of apelin ligand blunts cardiac hypertrophic induction from APLNR/APJ on response to pathological stimuli. Plays a key role in early development such as gastrulation, blood vessels formation and heart morphogenesis by acting as a APELA receptor. May promote angioblast migration toward the embryonic midline, i.e. the position of the future vessel formation, during vasculogenesis. Promotes sinus venosus (SV)-derived endothelial cells migration into the developing heart to promote coronary blood vessel development. Also plays a role in various processes in adults such as regulation of blood vessel formation, blood pressure, heart contractility and heart failure. This Rattus norvegicus (Rat) protein is Apelin receptor.